The following is a 527-amino-acid chain: CTP synthase (527 aa).

The interval M1 to L270 is amidoligase domain. S12 contributes to the CTP binding site. S12 is a UTP binding site. ATP contacts are provided by residues G13–I18 and D70. Mg(2+) is bound by residues D70 and E145. Residues D152–E154, K191–Q196, and K227 contribute to the CTP site. UTP is bound by residues K191–Q196 and K227. Residues T292 to K525 enclose the Glutamine amidotransferase type-1 domain. An L-glutamine-binding site is contributed by G349. C376 (nucleophile; for glutamine hydrolysis) is an active-site residue. L-glutamine contacts are provided by residues L377–Q380, E400, and R455. Catalysis depends on residues H498 and E500.

The protein belongs to the CTP synthase family. As to quaternary structure, homotetramer.

The enzyme catalyses UTP + L-glutamine + ATP + H2O = CTP + L-glutamate + ADP + phosphate + 2 H(+). The catalysed reaction is L-glutamine + H2O = L-glutamate + NH4(+). It catalyses the reaction UTP + NH4(+) + ATP = CTP + ADP + phosphate + 2 H(+). The protein operates within pyrimidine metabolism; CTP biosynthesis via de novo pathway; CTP from UDP: step 2/2. Its activity is regulated as follows. Allosterically activated by GTP, when glutamine is the substrate; GTP has no effect on the reaction when ammonia is the substrate. The allosteric effector GTP functions by stabilizing the protein conformation that binds the tetrahedral intermediate(s) formed during glutamine hydrolysis. Inhibited by the product CTP, via allosteric rather than competitive inhibition. Catalyzes the ATP-dependent amination of UTP to CTP with either L-glutamine or ammonia as the source of nitrogen. Regulates intracellular CTP levels through interactions with the four ribonucleotide triphosphates. The sequence is that of CTP synthase from Methanospirillum hungatei JF-1 (strain ATCC 27890 / DSM 864 / NBRC 100397 / JF-1).